The sequence spans 79 residues: Protein FAM236A (79 aa).

Belongs to the FAM236 family.

This Homo sapiens (Human) protein is Protein FAM236A.